Here is a 212-residue protein sequence, read N- to C-terminus: Major fimbrial subunit (212 aa).

The first 18 residues, 1–18 (MKKTLLGSLILLAFATNA), serve as a signal peptide directing secretion. Cys42 and Cys82 are disulfide-bonded.

It belongs to the fimbrial protein family.

Its subcellular location is the fimbrium. In terms of biological role, mediates adherence to oropharyngeal epithelial cells. Helps the airway colonization process. The chain is Major fimbrial subunit (hifA) from Haemophilus influenzae.